Here is a 329-residue protein sequence, read N- to C-terminus: UPF0725 protein EMB2204 (329 aa).

The protein belongs to the UPF0725 (EMB2204) family.

In terms of biological role, may be involved in embryogenesis. This Arabidopsis thaliana (Mouse-ear cress) protein is UPF0725 protein EMB2204 (EMB2204).